The primary structure comprises 178 residues: ATP-dependent protease subunit HslV (178 aa).

Residue threonine 7 is part of the active site. Na(+) contacts are provided by glycine 162, cysteine 165, and threonine 168.

Belongs to the peptidase T1B family. HslV subfamily. In terms of assembly, a double ring-shaped homohexamer of HslV is capped on each side by a ring-shaped HslU homohexamer. The assembly of the HslU/HslV complex is dependent on binding of ATP.

It is found in the cytoplasm. The enzyme catalyses ATP-dependent cleavage of peptide bonds with broad specificity.. Allosterically activated by HslU binding. In terms of biological role, protease subunit of a proteasome-like degradation complex believed to be a general protein degrading machinery. The chain is ATP-dependent protease subunit HslV from Leptothrix cholodnii (strain ATCC 51168 / LMG 8142 / SP-6) (Leptothrix discophora (strain SP-6)).